Here is a 577-residue protein sequence, read N- to C-terminus: 2-hydroxyacyl-CoA lyase (577 aa).

Glu59 is a binding site for thiamine diphosphate. Residues 412–493 (TMDVGRAVLV…VIVFNNNGVY (82 aa)) form a thiamine pyrophosphate binding region. Positions 462 and 489 each coordinate Mg(2+).

Belongs to the TPP enzyme family. In terms of assembly, homotetramer. Mg(2+) serves as cofactor. The cofactor is thiamine diphosphate.

The enzyme catalyses an (R)-2-hydroxy-long-chain-fatty acyl-CoA = a long-chain fatty aldehyde + formyl-CoA. The catalysed reaction is a 2-hydroxy-3-methyl fatty acyl-CoA = a 2-methyl-branched fatty aldehyde + formyl-CoA. Functionally, catalyzes a carbon-carbon cleavage reaction; cleaves a 2-hydroxy-3-methylacyl-CoA into formyl-CoA and a 2-methyl-branched fatty aldehyde. This is 2-hydroxyacyl-CoA lyase from Oryza sativa subsp. japonica (Rice).